Here is a 400-residue protein sequence, read N- to C-terminus: Enoyl-[acyl-carrier-protein] reductase [NADH] (400 aa).

Residues 48 to 53 (GSSSGY), 74 to 75 (FE), 111 to 112 (DA), and 139 to 140 (LA) each bind NAD(+). Tyrosine 225 lines the substrate pocket. The Proton donor role is filled by tyrosine 235. Residues lysine 244 and 273–275 (VVT) contribute to the NAD(+) site.

It belongs to the TER reductase family. Monomer.

It catalyses the reaction a 2,3-saturated acyl-[ACP] + NAD(+) = a (2E)-enoyl-[ACP] + NADH + H(+). It functions in the pathway lipid metabolism; fatty acid biosynthesis. In terms of biological role, involved in the final reduction of the elongation cycle of fatty acid synthesis (FAS II). Catalyzes the reduction of a carbon-carbon double bond in an enoyl moiety that is covalently linked to an acyl carrier protein (ACP). The polypeptide is Enoyl-[acyl-carrier-protein] reductase [NADH] (Shewanella woodyi (strain ATCC 51908 / MS32)).